The sequence spans 1062 residues: Histone H3-lysine(4) N-trimethyltransferase ATX1 (1062 aa).

Positions 159–184 are disordered; the sequence is NAFSGNKQNGSSRRKGSSSKNQDKAT. The 65-residue stretch at 301 to 365 folds into the PWWP domain; the sequence is PGDIVWAKLA…VKQAISFIKG (65 aa). The interval 401 to 424 is disordered; the sequence is QLQKGADSVDSDMANSTEEGNSGG. In terms of domain architecture, FYR N-terminal spans 441–500; it reads DFRHIIGDLLIINLGKVVTDSQFFKDENHIWPEGYTAMRKFTSLTDHSASALYKMEVLRD. In terms of domain architecture, FYR C-terminal spans 504–586; it reads KTHPLFIVTA…RPSSHVSMCK (83 aa). The Phorbol-ester/DAG-type zinc finger occupies 591–647; it reads RHQNQPTGYRPVRVDWKDLDKCNVCHMDEEYENNLFLQCDKCRMMVHAKCYGELEPC. Residues 599–1062 form an interaction with PIP5 region; it reads YRPVRVDWKD…RCDLIDWTAE (464 aa). Residues 609-660 form a PHD-type 1 zinc finger; sequence LDKCNVCHMDEEYENNLFLQCDKCRMMVHAKCYGELEPCDGALWLCNLCRPG. A C2HC pre-PHD-type zinc finger spans residues 665–698; the sequence is PPRCCLCPVVGGAMKPTTDGRWAHLACAIWIPET. The PHD-type 2 zinc-finger motif lies at 722-785; sequence LMCTICGVSY…RMLSFCKRHR (64 aa). The SET domain occupies 898–1016; it reads KRLAFGKSGI…KWEELTYDYR (119 aa). Histidine 908 contributes to the S-adenosyl-L-methionine binding site. Serine 947 is a glycosylation site (O-linked (GlcNAc) serine). Residues tyrosine 954 and 977–978 contribute to the S-adenosyl-L-methionine site; that span reads NH. Zn(2+)-binding residues include cysteine 980, cysteine 1026, cysteine 1028, and cysteine 1033. Residues 1022–1038 enclose the Post-SET domain; the sequence is ERLSCSCGFPGCRGVVN.

This sequence belongs to the class V-like SAM-binding methyltransferase superfamily. Histone-lysine methyltransferase family. TRX/MLL subfamily. As to quaternary structure, interacts with PIP5. Interacts with WDR5A. Binds to CLF in the nucleus. Interacts with NRPB1 CTD domain, especially when NRPB1 is phosphorylated on 'Ser-5' of the heptapeptide repeat. Component of a nuclear protein complex containing at least TATA binding proteins (TBPs, e.g. TBP1 and TBP2) and ATX1. Associates with ULT1 for trimethylating 'Lys-4' on histone H3 (H3K4me3) at flower MADS box gene loci. Interacts with SEC. Interacts with A4/EF1A in the cytoplasm on the nuclear periphery. Activated via O-glycosylation by SEC; this modification triggers FLC locus H3K4me3 histone modification, thus preventing premature flowering. Strongly expressed in cotyledons, but weak levels in the first true leaves, except at the hydothodes. Ubiquitous with higher levels in dividing tissues, including inflorescence meristem and flower primordia. Expressed also in leaves (especially at hydathodes), in growing inflorescence stems and in the mature flowers. In terms of tissue distribution, strongly expressed in young seedlings.

Its subcellular location is the nucleus. The protein localises to the cytoplasm. It localises to the perinuclear region. The enzyme catalyses L-lysyl(4)-[histone H3] + 3 S-adenosyl-L-methionine = N(6),N(6),N(6)-trimethyl-L-lysyl(4)-[histone H3] + 3 S-adenosyl-L-homocysteine + 3 H(+). It catalyses the reaction L-lysyl-[protein] + 3 S-adenosyl-L-methionine = N(6),N(6),N(6)-trimethyl-L-lysyl-[protein] + 3 S-adenosyl-L-homocysteine + 3 H(+). In terms of biological role, binds to the promoter and regulates the transcription of target genes, maintaining them in an active state; at promoters, required for TATA binding proteins (TBPs, e.g. TBP1 and TBP2) and RNA polymerase II (Pol II) recruitment, and, in a subsequent event, is recruited by a phosphorylated form of Pol II to the +300-bp region of transcribed sequences to trimethylates nucleosomes. Histone trimethyltransferase that trimethylates 'Lys-4' of histone H3 (H3K4me3); H3 'Lys-4' methylation represents a specific tag for epigenetic transcriptional activation and is required for efficient elongation of transcription but not for transcription initiation. Methylates only a limited fraction of nucleosomes of target genes (e.g. FLC, NAP, XTH33 and WRKY70). Necessary for WDR5A occupancy at WRKY70 and LTP7 genes. Required to maintain the active state of class A (AP1 and AP2), class B (PI and AP3) and class C (AG, AGAMOUS) floral homeotic genes at early stages of flower development. Together with CLF, modulates AG nucleosome methylation statement. Involved in epigenetic regulation (e.g. H3K4me3) of the floral repressors FLC, FT and SOC1 to prevent the transition from vegetative to reproductive development, independently of the photoperiod; binds the active FLC locus before flowering, but this interaction is released upon the transition to flowering. Regulates floral organ identity and flowering transition. Functions as a receptor for the lipid messenger phosphatidylinositol 5-phosphate (PI5P), which negatively regulates its transcriptional activation activity. Exhibits histone methylase activity and subsequent transcriptional regulation on WRKY70 gene, and, to a lower extent on secondary defense-response targets salicylic acid (SA)-responsive gene PR1 and jasmonic acid (JA)-responsive gene THI2.1. Involved in response to dehydration stress-response in both abscisic acid (ABA)-dependent and ABA-independent pathways; this includes specific genes (e.g. COR15A, ADH1, CBF4, RD29A, RD29B, RD26, ABF3, NCED3 and ABA3) epigenetic regulation (e.g. H3K4me3 and Pol II recruitment) to promote their transcription and influence ABA production. Implicated in stomatal closure regulation. Indirect repressor of XTH genes (XTH33). Necessary for the phosphorylation of Pol II NRPB1 (e.g. Ser5P and Ser2P) at the promoters of target genes, thus regulating both early and late stages of transcription. Controls root growth and architecture by regulating the timing of root development, stem cell niche maintenance (e.g. quiescent center (QC)), and cell patterning during primary and lateral root development. Modulates cell cycle duration, cell production, and the transition from cell proliferation in the root apical meristem (RAM) to cell elongation. Functionally, trimethylates A4/EF1A post-translationally at Lys-396. Required for actin cytoskeleton organization. The protein is Histone H3-lysine(4) N-trimethyltransferase ATX1 of Arabidopsis thaliana (Mouse-ear cress).